A 209-amino-acid chain; its full sequence is MKSDLRYFFLFCIQVEILAGEFNDSAASEMFIFHNGGVQILCKYPDTVRQFKMQLLKGDNVLCDLTKTKENEDTVSIRNLNVCKFQLSNNSVSFFLYNLDSSYASYYICKLSIFDPPPFQVDILSREYLNIYESELCCQLKFWLPIGCAAFVTVCVFGCVLMYWLTKKKYPTSVHDPNSEYMFMAAVNTAKKPAPTDVTRNLELPGTQA.

The N-terminal stretch at 1–19 (MKSDLRYFFLFCIQVEILA) is a signal peptide. At 20-141 (GEFNDSAASE…YESELCCQLK (122 aa)) the chain is on the extracellular side. A glycan (N-linked (GlcNAc...) asparagine) is linked at Asn-23. The region spanning 30-133 (MFIFHNGGVQ…LSREYLNIYE (104 aa)) is the Ig-like V-type domain. Disulfide bonds link Cys-42-Cys-109 and Cys-63-Cys-83. An N-linked (GlcNAc...) asparagine glycan is attached at Asn-89. The chain crosses the membrane as a helical span at residues 142–162 (FWLPIGCAAFVTVCVFGCVLM).

Homodimer; disulfide-linked. Interacts with ICOSLG. Interacts with PIK3R1. Interacts with TBK1; this interaction is critical for the maturation of T follicular regulatory cells. In terms of processing, N-glycosylated.

Its subcellular location is the cell membrane. Functionally, stimulatory receptor expressed in activated or antigen-experienced T-cells that plays an important role in the immune response. Upon binding to its ligand ICOSL expressed on antigen presenting cells (APCs), delivers costimulatory signals that enhances all basic T-cell responses to a foreign antigen, namely proliferation, secretion of lymphokines including IL10, up-regulation of molecules that mediate cell-cell interaction, and effective help for antibody secretion by B-cells. Also acts as a costimulatory receptor critical for the differentiation of T follicular regulatory cells upon immune challenges such as viral infection. Mechanistically, potentiates TCR-induced calcium flux by augmenting PLCG1 activation and actin remodeling. In addition, activates PI3K signaling pathways independently of calcium flux. Essential both for efficient interaction between T and B-cells and for normal antibody responses to T-cell dependent antigens. Prevents the apoptosis of pre-activated T-cells. Plays a critical role in CD40-mediated class switching of immunoglobin isotypes. In Bos taurus (Bovine), this protein is Inducible T-cell costimulator (ICOS).